A 478-amino-acid chain; its full sequence is JmjC domain-containing histone demethylation protein 1 (478 aa).

The PHD-type zinc-finger motif lies at 5-68; it reads SESCPLCKVH…IYHCPECVPK (64 aa). The region spanning 217–383 is the JmjC domain; the sequence is SDVAKLGVDF…MQLKINEIER (167 aa). T266 contacts substrate. 2 residues coordinate Fe cation: H269 and D271. K286 is a substrate binding site. Fe cation is bound at residue H351.

The protein belongs to the JHDM1 histone demethylase family. Fe(2+) is required as a cofactor.

Its subcellular location is the nucleus. It carries out the reaction N(6),N(6)-dimethyl-L-lysyl(36)-[histone H3] + 2 2-oxoglutarate + 2 O2 = L-lysyl(36)-[histone H3] + 2 formaldehyde + 2 succinate + 2 CO2. Its function is as follows. Histone demethylase that specifically demethylates 'Lys-36' of histone H3, thereby playing a central role in histone code. This is JmjC domain-containing histone demethylation protein 1 (JHD1) from Candida albicans (strain SC5314 / ATCC MYA-2876) (Yeast).